Consider the following 615-residue polypeptide: Sodium-coupled neutral amino acid transporter 9 homolog (615 aa).

Over 1–165 (MPPFFAEFTE…LKDVSGKQGS (165 aa)) the chain is Cytoplasmic. The tract at residues 41–65 (VDDNDTDPLLDDEPPRRLPPAGGVP) is disordered. Acidic residues predominate over residues 42–52 (DDNDTDPLLDD). A helical transmembrane segment spans residues 166–186 (IVTIFSIWNTMMGTSLLAMPW). The interval 175–180 (TMMGTS) is important for arginine binding and amino acid transport. At 187–192 (ALQQAG) the chain is on the lumenal side. The chain crosses the membrane as a helical span at residues 193–213 (LVLGIIIMLSMAAICFYTAYI). Residues 214 to 246 (VIESPKRLQDLSVDPLLAEFSDVCKSLFGRIGE) are Cytoplasmic-facing. The helical transmembrane segment at 247–273 (YCAVVFSVCVLIGGVIVYWVLMSNFLY) threads the bilayer. Over 274 to 341 (YTGAVVYESM…TGDDSWSFDK (68 aa)) the chain is Lumenal. N-linked (GlcNAc...) asparagine glycans are attached at residues Asn-286 and Asn-295. Residues Cys-304 and Cys-478 are joined by a disulfide bond. Residues 342–358 (FWTLRGTVPIYLAFALF) traverse the membrane as a helical segment. Residues 359–367 (PLMNFKSPT) lie on the Cytoplasmic side of the membrane. The chain crosses the membrane as a helical span at residues 368–392 (FFTKFNVLGTISVMYLLMFVFSKLL). Over 393–413 (ECGVNMDFSNPKSIHYVQLAN) the chain is Lumenal. A helical membrane pass occupies residues 414–434 (MHFPALSGTLTLSYFIHNAVL). The Cytoplasmic segment spans residues 435 to 451 (TILRNQKHPENNARDLS). The helical transmembrane segment at 452-472 (IGYCLVAFCYVFIGFTFFAAF) threads the bilayer. Residues 473–491 (PVQRSCISDNFLNNFGAGD) lie on the Lumenal side of the membrane. Residues 492–512 (VLSSTARLFLLFQMITVLPLL) traverse the membrane as a helical segment. The Cytoplasmic portion of the chain corresponds to 513-533 (MFLVRSQLFYAIFGQTWPGAI). A helical membrane pass occupies residues 534–554 (RVIILNVLLIAVAVGFATFYP). At 555–561 (NVGSILR) the chain is on the lumenal side. A helical transmembrane segment spans residues 562–582 (YVGSISGLVYVFALPAMVYIK). The Cytoplasmic segment spans residues 583–594 (QSEAAGTLTPMK). Residues 595–615 (KYAHYGIIVIGVANLIAQFVI) traverse the membrane as a helical segment.

The protein belongs to the amino acid/polyamine transporter 2 family. SLC38A9 subfamily.

The protein localises to the lysosome membrane. It localises to the late endosome membrane. Amino acid transport is sodium-dependent. Transport of leucine, tyrosine and phenylalanine is increased by arginine binding. Lysosomal amino acid transporter involved in the activation of mTORC1 in response to amino acid levels. Probably acts as an amino acid sensor of the Rag GTPases and Ragulator complexes, 2 complexes involved in amino acid sensing and activation of mTORC1, a signaling complex promoting cell growth in response to growth factors, energy levels, and amino acids. In Caenorhabditis elegans, this protein is Sodium-coupled neutral amino acid transporter 9 homolog.